The sequence spans 111 residues: Iron-sulfur cluster assembly protein CyaY (111 aa).

It belongs to the frataxin family.

Involved in iron-sulfur (Fe-S) cluster assembly. May act as a regulator of Fe-S biogenesis. In Cupriavidus pinatubonensis (strain JMP 134 / LMG 1197) (Cupriavidus necator (strain JMP 134)), this protein is Iron-sulfur cluster assembly protein CyaY.